The chain runs to 320 residues: Protoheme IX farnesyltransferase 1 (320 aa).

Helical transmembrane passes span 34-54 (GIIISNSIAAFGGFWIAFASA), 58-78 (LTGLAFLMTMVTAMLGTAFVM), 112-132 (AMILTYGSVLGIAGLAMLYSL), 135-155 (LTAFLGLAAFIFYAIIYTVWV), 160-180 (VWSTFVGSFPGAAPPLMGYCA), 189-209 (AVLLYTIMFLWQPPHFWAIGI), 234-254 (IKMMQYIAVLVPVTLLFPFSL), 255-275 (GTGHISPFYFLAALVLGGIWI), and 299-319 (LIYFCLLFFIMMIDSFMMFLI).

The protein belongs to the UbiA prenyltransferase family. Protoheme IX farnesyltransferase subfamily. In terms of assembly, interacts with CtaA.

It is found in the cell membrane. It carries out the reaction heme b + (2E,6E)-farnesyl diphosphate + H2O = Fe(II)-heme o + diphosphate. Its pathway is porphyrin-containing compound metabolism; heme O biosynthesis; heme O from protoheme: step 1/1. Functionally, converts heme B (protoheme IX) to heme O by substitution of the vinyl group on carbon 2 of heme B porphyrin ring with a hydroxyethyl farnesyl side group. In Bacillus subtilis (strain 168), this protein is Protoheme IX farnesyltransferase 1 (ctaB1).